The sequence spans 265 residues: Undecaprenyl-diphosphatase (265 aa).

The next 8 membrane-spanning stretches (helical) occupy residues 19–39, 42–62, 80–100, 108–128, 143–163, 181–201, 220–240, and 243–263; these read FLPV…GFTG, ADSF…CLYW, IRGL…GLVA, LFNP…IFLV, MTPG…WPGF, SLAA…ATLY, IGFV…IVLV, and ITLR…FFFW.

Belongs to the UppP family.

The protein resides in the cell inner membrane. It catalyses the reaction di-trans,octa-cis-undecaprenyl diphosphate + H2O = di-trans,octa-cis-undecaprenyl phosphate + phosphate + H(+). In terms of biological role, catalyzes the dephosphorylation of undecaprenyl diphosphate (UPP). Confers resistance to bacitracin. The sequence is that of Undecaprenyl-diphosphatase from Solidesulfovibrio magneticus (strain ATCC 700980 / DSM 13731 / RS-1) (Desulfovibrio magneticus).